Reading from the N-terminus, the 406-residue chain is DNA repair protein RAD55 (406 aa).

Residue 43–50 participates in ATP binding; sequence GPPGIGKT. Positions 385–406 are disordered; it reads DSNDNPLPNAEGKEEIIYDSEG.

The protein belongs to the RecA family. RAD55 subfamily.

The protein resides in the nucleus. In terms of biological role, required for radiation resistance and meiotic viability and presumably acts in recombination and recombinational DNA repair pathways. The protein is DNA repair protein RAD55 (RAD55) of Saccharomyces cerevisiae (strain ATCC 204508 / S288c) (Baker's yeast).